The sequence spans 234 residues: Sugar fermentation stimulation protein homolog (234 aa).

Belongs to the SfsA family.

The sequence is that of Sugar fermentation stimulation protein homolog from Shewanella loihica (strain ATCC BAA-1088 / PV-4).